The primary structure comprises 204 residues: NADH-quinone oxidoreductase subunit C (204 aa).

It belongs to the complex I 30 kDa subunit family. NDH-1 is composed of 14 different subunits. Subunits NuoB, C, D, E, F, and G constitute the peripheral sector of the complex.

It is found in the cell inner membrane. The catalysed reaction is a quinone + NADH + 5 H(+)(in) = a quinol + NAD(+) + 4 H(+)(out). NDH-1 shuttles electrons from NADH, via FMN and iron-sulfur (Fe-S) centers, to quinones in the respiratory chain. The immediate electron acceptor for the enzyme in this species is believed to be ubiquinone. Couples the redox reaction to proton translocation (for every two electrons transferred, four hydrogen ions are translocated across the cytoplasmic membrane), and thus conserves the redox energy in a proton gradient. The polypeptide is NADH-quinone oxidoreductase subunit C (Vesicomyosocius okutanii subsp. Calyptogena okutanii (strain HA)).